The sequence spans 370 residues: mRNA cap guanine-N(7) methyltransferase 1 (370 aa).

Positions 1-11 (MKRGFSDSPSS) are enriched in low complexity. The interval 1 to 34 (MKRGFSDSPSSSAPPPSSRFKSNPEGDSQFLEDE) is disordered. The mRNA cap 0 methyltransferase domain maps to 61-341 (SPIIHLKKLN…LYLSFVLRKR (281 aa)). Residue 70–71 (NN) participates in mRNA binding. S-adenosyl-L-methionine-binding positions include lysine 74, alanine 92, aspartate 114, 150 to 151 (DC), and 172 to 174 (QFA).

This sequence belongs to the class I-like SAM-binding methyltransferase superfamily. mRNA cap 0 methyltransferase family.

The protein localises to the nucleus. The enzyme catalyses a 5'-end (5'-triphosphoguanosine)-ribonucleoside in mRNA + S-adenosyl-L-methionine = a 5'-end (N(7)-methyl 5'-triphosphoguanosine)-ribonucleoside in mRNA + S-adenosyl-L-homocysteine. Functionally, mRNA-capping methyltransferase that methylates the N7 position of the added guanosine to the 5'-cap structure of mRNAs. Binds RNA containing 5'-terminal GpppC. The protein is mRNA cap guanine-N(7) methyltransferase 1 of Arabidopsis thaliana (Mouse-ear cress).